The following is a 492-amino-acid chain: Cytochrome P450 2B12 (492 aa).

Residue Ser129 is modified to Phosphoserine. Residue Cys437 participates in heme binding.

It belongs to the cytochrome P450 family. The cofactor is heme. As to expression, preputial gland, but not in liver.

Its subcellular location is the endoplasmic reticulum membrane. It is found in the microsome membrane. It catalyses the reaction an organic molecule + reduced [NADPH--hemoprotein reductase] + O2 = an alcohol + oxidized [NADPH--hemoprotein reductase] + H2O + H(+). Functionally, cytochromes P450 are a group of heme-thiolate monooxygenases. In liver microsomes, this enzyme is involved in an NADPH-dependent electron transport pathway. This isozyme seems responsible for metabolism of 2,2',4,4',5,5'-hexachlorobiphenyl. In Rattus norvegicus (Rat), this protein is Cytochrome P450 2B12 (Cyp2b12).